A 232-amino-acid chain; its full sequence is Putative dimethylsulfoniopropionate lyase DddL (232 aa).

A divalent metal cation is bound by residues histidine 154, glutamate 159, tyrosine 161, and histidine 190.

Belongs to the non-heme iron-dependent dioxygenase family. In terms of assembly, homodimer. A divalent metal cation serves as cofactor.

The enzyme catalyses S,S-dimethyl-beta-propiothetin = acrylate + dimethyl sulfide + H(+). In terms of biological role, may cleave dimethylsulfoniopropionate (DMSP), releasing dimethyl sulfide (DMS). DMS is the principal form by which sulfur is transported from oceans to the atmosphere. The real activity of the protein is however subject to debate and it is unclear whether it constitutes a real dimethylsulfoniopropionate lyase in vivo. The sequence is that of Putative dimethylsulfoniopropionate lyase DddL (dddL) from Cereibacter sphaeroides (strain ATCC 17023 / DSM 158 / JCM 6121 / CCUG 31486 / LMG 2827 / NBRC 12203 / NCIMB 8253 / ATH 2.4.1.) (Rhodobacter sphaeroides).